The chain runs to 792 residues: Ubiquitin carboxyl-terminal hydrolase 10 (792 aa).

The interval 2–27 is DHR2-binding module; it reads TTQESIKPLVDRILSNPLQFNAAMIS. Disordered stretches follow at residues 64–87 and 103–320; these read AESK…NTVP and KDAA…SITP. Positions 107-129 are enriched in low complexity; the sequence is DATGAKKSAELSTELSTEPPSSS. An SIR4-binding module region spans residues 109–145; sequence TGAKKSAELSTELSTEPPSSSSEDDKVGKEEEEEGEI. Positions 144–171 are enriched in basic and acidic residues; that stretch reads EIFHEARDYVEPRKASLKERDNADKGDG. Positions 167 to 208 are UTP22-binding module; the sequence is DKGDGEDIGEDIGEDIGEDIGEDIGEDIGENLGSPLATIDDS. The span at 172–195 shows a compositional bias: acidic residues; that stretch reads EDIGEDIGEDIGEDIGEDIGEDIG. Positions 211 to 220 are enriched in basic and acidic residues; sequence ENEKEKRKEL. The segment covering 226–241 has biased composition (acidic residues); the sequence is SDDEIEDDEDEDDMDY. A compositionally biased stretch (polar residues) spans 288–297; that stretch reads VNNTKENGNR. The region spanning 362–733 is the USP domain; that stretch reads RGLLNHGVTC…NAYYLLYTRL (372 aa). C371 serves as the catalytic Nucleophile. The interval 526 to 563 is disordered; that stretch reads LDPNSDLSSDSINGTSATTSTTTSNAATKPSLSSSSSV. Positions 530–539 are enriched in polar residues; that stretch reads SDLSSDSING. Residues 540-563 show a composition bias toward low complexity; it reads TSATTSTTTSNAATKPSLSSSSSV. H691 (proton acceptor) is an active-site residue. Polar residues predominate over residues 749–766; that stretch reads TGNVTSKSKQEQAVNEPN. The segment at 749-792 is disordered; the sequence is TGNVTSKSKQEQAVNEPNNRPLKINSKKNNRKKWKKNKKRKFTK. Basic residues predominate over residues 773 to 792; that stretch reads NSKKNNRKKWKKNKKRKFTK.

This sequence belongs to the peptidase C19 family. As to quaternary structure, interacts with SIR4. Interacts with the proliferating-cell nuclear antigen PCNA/POL30. Interacts with DHR2 and UTP22.

The protein resides in the nucleus. Its subcellular location is the chromosome. It localises to the telomere. The protein localises to the nucleolus. It catalyses the reaction Thiol-dependent hydrolysis of ester, thioester, amide, peptide and isopeptide bonds formed by the C-terminal Gly of ubiquitin (a 76-residue protein attached to proteins as an intracellular targeting signal).. Its function is as follows. Deubiquitinating enzyme involved in telomere and HM loci silencing, which is the repression of chromatin structure which leads to a stop in the transcription of nearby genes. Targets histone H2B for deubiquitination, thus helping to localize SIR2 to the telomere. At silent chromatin, including telomeres and the rDNA locus, not only maintains low H2B 'Lys-123' ubiquitination (H2BK123Ub), but also low H3 'Lys-4' and 'Lys-79' methylation (H3K4me and H3K79me, respectively). Controls the proliferating-cell nuclear antigen PCNA/POL30 deubiquitination which is crucial for keeping TLS polymerases in check as well as for down-regulating the error-free bypass. Deubiquitinates and stabilizes RPA190, the largest subunit of RNA polymerase I, to achieve optimal levels of ribosomes and cell growth. Also protects nutrient transporters such as GAP1 from ubiquitin-dependent endocytosis. In Saccharomyces cerevisiae (strain ATCC 204508 / S288c) (Baker's yeast), this protein is Ubiquitin carboxyl-terminal hydrolase 10 (UBP10).